Consider the following 310-residue polypeptide: Homoserine kinase (310 aa).

95-105 (PQSRGLGSSAA) serves as a coordination point for ATP.

It belongs to the GHMP kinase family. Homoserine kinase subfamily.

It localises to the cytoplasm. It carries out the reaction L-homoserine + ATP = O-phospho-L-homoserine + ADP + H(+). It functions in the pathway amino-acid biosynthesis; L-threonine biosynthesis; L-threonine from L-aspartate: step 4/5. Functionally, catalyzes the ATP-dependent phosphorylation of L-homoserine to L-homoserine phosphate. The sequence is that of Homoserine kinase from Corynebacterium kroppenstedtii (strain DSM 44385 / JCM 11950 / CIP 105744 / CCUG 35717).